Here is a 388-residue protein sequence, read N- to C-terminus: Lipid-A-disaccharide synthase (388 aa).

It belongs to the LpxB family.

The catalysed reaction is a lipid X + a UDP-2-N,3-O-bis[(3R)-3-hydroxyacyl]-alpha-D-glucosamine = a lipid A disaccharide + UDP + H(+). It functions in the pathway bacterial outer membrane biogenesis; LPS lipid A biosynthesis. In terms of biological role, condensation of UDP-2,3-diacylglucosamine and 2,3-diacylglucosamine-1-phosphate to form lipid A disaccharide, a precursor of lipid A, a phosphorylated glycolipid that anchors the lipopolysaccharide to the outer membrane of the cell. This chain is Lipid-A-disaccharide synthase, found in Saccharophagus degradans (strain 2-40 / ATCC 43961 / DSM 17024).